Reading from the N-terminus, the 156-residue chain is Ribonuclease H (156 aa).

The 143-residue stretch at T2–S144 folds into the RNase H type-1 domain. Mg(2+) is bound by residues D11, E49, D71, and D136.

This sequence belongs to the RNase H family. Monomer. Requires Mg(2+) as cofactor.

The protein localises to the cytoplasm. The enzyme catalyses Endonucleolytic cleavage to 5'-phosphomonoester.. Its function is as follows. Endonuclease that specifically degrades the RNA of RNA-DNA hybrids. The sequence is that of Ribonuclease H from Nitratidesulfovibrio vulgaris (strain DSM 19637 / Miyazaki F) (Desulfovibrio vulgaris).